We begin with the raw amino-acid sequence, 486 residues long: Monocarboxylate transporter 12 (486 aa).

Topologically, residues 1–9 (MTKITRVGS) are cytoplasmic. 6 helical membrane-spanning segments follow: residues 10–30 (ASPPDGGWGWMIVAGCFLVTI), 58–78 (AWIHSIVDCMTMLCAPLGSVV), 86–106 (AGIMLGGLLASTGLILGSFAT), 115–135 (LGVLTGLGFALCYSPAIAMVG), 148–168 (IAMSGSGIGTFILAPVVQLLI), and 177–197 (LLILGGFVLNLCVCGALMRPI). Over residues 201-220 (EDPSGPEKSHDRDAQREDCK) the composition is skewed to basic and acidic residues. The interval 201-221 (EDPSGPEKSHDRDAQREDCKQ) is disordered. 6 helical membrane-spanning segments follow: residues 253-273 (FVVLAVSVLFMAYGCSPLFVY), 289-309 (AFLMSILGVIDIVGNITFGWL), 320-340 (YVCYLFAVALDGLCYLCLPML), 353-373 (FGYFDGAYVTLIPVVTAEIVG), 383-403 (VVYFLHAVPYLVSPPIAGWLV), and 410-430 (TAAFLLCGFAMIFSSILLGFA). The Cytoplasmic segment spans residues 431–486 (KIAKRMKRTQVPFLVKDSDPKLHLWTNGSVAYSIAKELDQKDEESLAKARTGCNLT).

The protein belongs to the major facilitator superfamily. Monocarboxylate porter (TC 2.A.1.13) family. Interacts with isoform 2 of BSG; this interaction is required for its localization to the plasma membrane. As to expression, detected in kidney, choroid plexus, testis, lung, stomach, large and small intestine, spleen, fat and parotid gland. In eye, expressed in cornea, ciliary epithelium, lens epithelium and lens fiber.

It localises to the cell membrane. The protein resides in the basolateral cell membrane. The catalysed reaction is creatine(in) = creatine(out). It carries out the reaction guanidinoacetate(in) = guanidinoacetate(out). Its activity is regulated as follows. Creatine uptake is inhibited by carbonyl cyanide 3-chlorophenylhydrazone (CCCP) and by valinomycin. Functions as a transporter for creatine and as well for its precursor guanidinoacetate. Transport of creatine and GAA is independent of resting membrane potential and extracellular Na(+), Cl(-), or pH. Contributes to the process of creatine biosynthesis and distribution. This chain is Monocarboxylate transporter 12, found in Rattus norvegicus (Rat).